Consider the following 379-residue polypeptide: 23S rRNA (uracil(747)-C(5))-methyltransferase RlmC (379 aa).

[4Fe-4S] cluster contacts are provided by Cys3, Cys11, Cys14, and Cys86. 4 residues coordinate S-adenosyl-L-methionine: Gln211, Phe240, Glu262, and Asn310. Cys337 acts as the Nucleophile in catalysis.

It belongs to the class I-like SAM-binding methyltransferase superfamily. RNA M5U methyltransferase family. RlmC subfamily.

The enzyme catalyses uridine(747) in 23S rRNA + S-adenosyl-L-methionine = 5-methyluridine(747) in 23S rRNA + S-adenosyl-L-homocysteine + H(+). Catalyzes the formation of 5-methyl-uridine at position 747 (m5U747) in 23S rRNA. This is 23S rRNA (uracil(747)-C(5))-methyltransferase RlmC from Halothiobacillus neapolitanus (strain ATCC 23641 / c2) (Thiobacillus neapolitanus).